The primary structure comprises 414 residues: MSQANLSETLFKPRFKHPETSTLVRRFSAGKPQAMQSALSGNHVDHWYRLINRLMWIWRGVTPQEILDVQARIVMSEAERTDPELFDTVIGYRGGNWIFEWAKEAMQWQQKAGQEADPLLSGRHWLHASNLYSIAAYPHIKGDELAEQAQALANRAYEEAAQRLPGSLRELEFTIPGGSPITGFLHMPKGDGPFPTVLMCGGLDSLQTDYYNLYENYFSPLGIAMLTIDMPSIGFSSKWTLNQDTSLLHQHALRHLENVPWVDHTRVAAFGFRFGANIAVRLGYLEPQRLKAVACLGPVVHGLLVDPLHQGRVPEMYLDVLASRLGMHDASDEALRVELNRYSLKTQGLLGRRCPTPMLSGFWKDDPFSPEEESRLITSSSADGKLLEIPFNPVYRNFDHALRQIARWINHRFG.

The protein belongs to the FrsA family.

The enzyme catalyses a carboxylic ester + H2O = an alcohol + a carboxylate + H(+). Its function is as follows. Catalyzes the hydrolysis of esters. In Klebsiella pneumoniae (strain 342), this protein is Esterase FrsA.